We begin with the raw amino-acid sequence, 363 residues long: 3-dehydroquinate synthase (363 aa).

Residues Asp-74–Lys-79, Gly-108–Asp-112, Thr-132–Thr-133, Lys-145, Lys-154, and Cys-172–Thr-175 contribute to the NAD(+) site. Positions 187, 250, and 267 each coordinate Zn(2+).

The protein belongs to the sugar phosphate cyclases superfamily. Dehydroquinate synthase family. NAD(+) is required as a cofactor. The cofactor is Co(2+). Requires Zn(2+) as cofactor.

It is found in the cytoplasm. It catalyses the reaction 7-phospho-2-dehydro-3-deoxy-D-arabino-heptonate = 3-dehydroquinate + phosphate. It functions in the pathway metabolic intermediate biosynthesis; chorismate biosynthesis; chorismate from D-erythrose 4-phosphate and phosphoenolpyruvate: step 2/7. In terms of biological role, catalyzes the conversion of 3-deoxy-D-arabino-heptulosonate 7-phosphate (DAHP) to dehydroquinate (DHQ). This Buchnera aphidicola subsp. Acyrthosiphon pisum (strain APS) (Acyrthosiphon pisum symbiotic bacterium) protein is 3-dehydroquinate synthase.